The following is a 122-amino-acid chain: Basic phospholipase A2 F15 (122 aa).

Intrachain disulfides connect C26/C115, C28/C44, C43/C95, C49/C122, C50/C88, C57/C81, and C75/C86. Ca(2+) is bound by residues Y27, G29, and G31. Residue H47 is part of the active site. D48 contacts Ca(2+). Residue D89 is part of the active site.

This sequence belongs to the phospholipase A2 family. Group II subfamily. D49 sub-subfamily. When this protein is associated with crotapotin (F5 or F7), it forms the crotoxin protein. It depends on Ca(2+) as a cofactor. Expressed by the venom gland.

Its subcellular location is the secreted. The enzyme catalyses a 1,2-diacyl-sn-glycero-3-phosphocholine + H2O = a 1-acyl-sn-glycero-3-phosphocholine + a fatty acid + H(+). With respect to regulation, activated by heparin. Inhibited by its chaperone crotapotin. Functionally, snake venom phospholipase A2 (PLA2) that shows moderate neurotoxic activity in isolated mouse phrenic nerve diaphragm but shows high neurotoxic activity in a chick biventer cervis preparation. Also shows a high bactericidal effect against both Gram-negative and Gram-positive bacteria. PLA2 catalyzes the calcium-dependent hydrolysis of the 2-acyl groups in 3-sn-phosphoglycerides. The polypeptide is Basic phospholipase A2 F15 (Crotalus durissus terrificus (South American rattlesnake)).